Consider the following 546-residue polypeptide: Acyl-CoA ligase oryP (546 aa).

ATP-binding positions include T166–K174, Q300–L305, and R403. CoA-binding positions include W412 to H414 and L482 to R484. ATP is bound at residue K499.

This sequence belongs to the ATP-dependent AMP-binding enzyme family.

It functions in the pathway secondary metabolite biosynthesis. Its function is as follows. Acyl-CoA ligase; part of the gene cluster that mediates the biosynthesis of oryzines, natural products with an unusual maleidride backbone. The two subunits of the fungal fatty acid synthase oryfasA and oryfasB probably form octenoic acid. This fatty acid is most likely activated by the acyl-CoA ligase oryP to give octenyl-CoA before the citrate synthase-like protein oryE catalyzes condensation with oxaloacetate to form tricarboxylic acid. The next steps of the pathways are conjectural, but a favorite possible route has been proposed, beginning with decarboxylation and concomitant dehydration by the decarboxylase oryM, followed by tautomerization, which may lead to the production of a diene intermediate. Reduction of this diene intermediate could give the known metabolite piliformic acid. On the pathway to oryzine B and oryzine A, however, hydroxylation of the diene by the alpha-ketoglutarate-dependent dioxygenase oryG and lactonisation by the lactonohydrolases oryH or oryL could give oryzine B directly. Finally, enoyl reduction by the dehydrogenase oryD would then convert oryzine B into oryzine A. The chain is Acyl-CoA ligase oryP from Aspergillus oryzae (strain ATCC 42149 / RIB 40) (Yellow koji mold).